The following is a 195-amino-acid chain: Early light-induced protein 1, chloroplastic (195 aa).

The transit peptide at 1 to 46 directs the protein to the chloroplast; sequence MATASFNMQSVFAGGLTTRKINTNKLFSAGSFPNLKRNYPVGVRCM. A disordered region spans residues 46–81; it reads MAEGGPTNEDSSPAPSTSAAQPLPKSPSPPPPMKPK. The span at 56 to 68 shows a compositional bias: low complexity; that stretch reads SSPAPSTSAAQPL. Positions 69-79 are enriched in pro residues; sequence PKSPSPPPPMK. Transmembrane regions (helical) follow at residues 104 to 124, 131 to 151, and 175 to 195; these read LAMV…ENVL, GVSW…VPLF, and FAML…GTLV.

It belongs to the ELIP/psbS family.

It is found in the plastid. Its subcellular location is the chloroplast thylakoid membrane. Functionally, prevents excess accumulation of free chlorophyll by inhibiting the entire chlorophyll biosynthesis pathway (e.g. 5-aminolevulinate synthesis and Mg-protoporphyrin IX chelatase activity), and hence prevent photooxidative stress. Probably involved in the integration of pigments into the mature light-harvesting pigment-protein complexes. Light-harvesting chlorophyll (LHC) a/b-binding protein required to ensure a high rate of chlorophyll accumulation during deetiolation in continuous high light. Involved in seed germination. May fulfill a photoprotective functions. The chain is Early light-induced protein 1, chloroplastic from Arabidopsis thaliana (Mouse-ear cress).